The following is a 176-amino-acid chain: Ribosome rescue factor SmrB (176 aa).

The region spanning 93-168 (LDLHGYRQSE…GDAALLVLID (76 aa)) is the Smr domain.

The protein belongs to the SmrB family. As to quaternary structure, associates with collided ribosomes, but not with correctly translating polysomes.

Acts as a ribosome collision sensor. Detects stalled/collided disomes (pairs of ribosomes where the leading ribosome is stalled and a second ribosome has collided with it) and endonucleolytically cleaves mRNA at the 5' boundary of the stalled ribosome. Stalled/collided disomes form a new interface (primarily via the 30S subunits) that binds SmrB. Cleaved mRNA becomes available for tmRNA ligation, leading to ribosomal subunit dissociation and rescue of stalled ribosomes. The chain is Ribosome rescue factor SmrB from Shewanella baltica (strain OS223).